Here is a 232-residue protein sequence, read N- to C-terminus: Orotidine 5'-phosphate decarboxylase (232 aa).

Residues D11, K33, 60–69 (DLKFHDIPNT), T120, R181, Q190, G210, and R211 contribute to the substrate site. K62 (proton donor) is an active-site residue.

This sequence belongs to the OMP decarboxylase family. Type 1 subfamily. In terms of assembly, homodimer.

The enzyme catalyses orotidine 5'-phosphate + H(+) = UMP + CO2. It functions in the pathway pyrimidine metabolism; UMP biosynthesis via de novo pathway; UMP from orotate: step 2/2. Catalyzes the decarboxylation of orotidine 5'-monophosphate (OMP) to uridine 5'-monophosphate (UMP). In Vibrio vulnificus (strain CMCP6), this protein is Orotidine 5'-phosphate decarboxylase.